We begin with the raw amino-acid sequence, 309 residues long: Ecto-ADP-ribosyltransferase 5 (309 aa).

A signal peptide spans 1–23 (MILEDLLMVLSCLSLHALWKVRA). Cysteines 43 and 259 form a disulfide. Residues 63 to 253 (ALLRESWEAA…IVTLWSYDQT (191 aa)) enclose the TR mART core domain. Tyr100 contributes to the NAD(+) binding site. N-linked (GlcNAc...) asparagine glycosylation is present at Asn102. NAD(+) contacts are provided by Arg161 and Gln181. The active site involves Arg161. Ser184 is an active-site residue. Asn197 carries an N-linked (GlcNAc...) asparagine glycan. Position 215 (Ser215) interacts with NAD(+). Glu222 is an active-site residue.

Belongs to the Arg-specific ADP-ribosyltransferase family. In terms of tissue distribution, abundantly expressed in testis. Lower levels in cardiac and skeletal muscle.

It localises to the secreted. The protein localises to the membrane. It catalyses the reaction L-arginyl-[protein] + NAD(+) = N(omega)-(ADP-D-ribosyl)-L-arginyl-[protein] + nicotinamide + H(+). The chain is Ecto-ADP-ribosyltransferase 5 (Art5) from Mus musculus (Mouse).